A 647-amino-acid chain; its full sequence is Paraneoplastic antigen Ma6E (647 aa).

4 disordered regions span residues 111–199 (QPQG…AGGA), 227–254 (GAAG…RAAG), 508–580 (AAAP…VPWG), and 608–647 (RGQE…SQGK). Gly residues-rich tracts occupy residues 122–149 (GEGG…GEAG), 158–199 (GEAG…AGGA), and 227–251 (GAAG…GEGR). A compositionally biased stretch (low complexity) spans 517–570 (PAAAQASPAQGNASEAGPGAEDAAEAASATKEAARGAPAAGEGESAPAGPEGLG). Acidic residues predominate over residues 625–636 (EEPENEDEDGAG).

This chain is Paraneoplastic antigen Ma6E, found in Homo sapiens (Human).